Consider the following 162-residue polypeptide: uncharacterized protein (162 aa).

This is an uncharacterized protein from Aedes vexans (Inland floodwater mosquito).